Reading from the N-terminus, the 638-residue chain is Pheromone-processing carboxypeptidase KEX1 (638 aa).

A signal peptide spans 1-32 (MSSCQPPPFLSSMVVRWLSVWIILASSAFASA). At 33-519 (KCAADYYVRS…KAATWKAYYK (487 aa)) the chain is on the lumenal side. The active site involves serine 184. 3 N-linked (GlcNAc...) asparagine glycosylation sites follow: asparagine 203, asparagine 246, and asparagine 291. Residue aspartate 386 is part of the active site. Asparagine 437 and asparagine 445 each carry an N-linked (GlcNAc...) asparagine glycan. Histidine 448 is an active-site residue. N-linked (GlcNAc...) asparagine glycosylation occurs at asparagine 497. The chain crosses the membrane as a helical span at residues 520–540 (SGEVALVVVVIAAGAWGFFLW). At 541–638 (RSRRQRQGSG…QDGTPSASRT (98 aa)) the chain is on the cytoplasmic side. Positions 586-638 (ASELETLHDMDDRSPGPSRDNYSVGEDSETEDEKRYPPTDFDRQDGTPSASRT) are disordered. Basic and acidic residues-rich tracts occupy residues 590–599 (ETLHDMDDRS) and 617–630 (DEKR…DRQD).

This sequence belongs to the peptidase S10 family.

It localises to the golgi apparatus. It is found in the trans-Golgi network membrane. The catalysed reaction is Preferential release of a C-terminal arginine or lysine residue.. Functionally, protease with a carboxypeptidase B-like function involved in the C-terminal processing of the lysine and arginine residues from protein precursors. Promotes cell fusion and is involved in the programmed cell death. The polypeptide is Pheromone-processing carboxypeptidase KEX1 (KEX1) (Uncinocarpus reesii (strain UAMH 1704)).